An 892-amino-acid chain; its full sequence is Polyribonucleotide nucleotidyltransferase (892 aa).

Positions 407 to 427 (YMHNYEMPPYSTGETGRVGSP) are disordered. Mg(2+) contacts are provided by Asp521 and Asp527. The region spanning 587–646 (PRIITTTVPVDKIGEVIGPKGKMINQIQEDTGAEIAIEDDGTVYISSEGGEAAEKAKEII) is the KH domain. An S1 motif domain is found at 658–730 (GETYNGKVVK…DRGKISLAIP (73 aa)). Positions 727–892 (LAIPGFEDQE…VRRDFDPFED (166 aa)) are disordered. Basic and acidic residues-rich tracts occupy residues 739-844 (APRR…DRRS) and 851-877 (RRDDRNPRYAADENYDEYRADREERSE).

Belongs to the polyribonucleotide nucleotidyltransferase family. The cofactor is Mg(2+).

It is found in the cytoplasm. The catalysed reaction is RNA(n+1) + phosphate = RNA(n) + a ribonucleoside 5'-diphosphate. Functionally, involved in mRNA degradation. Catalyzes the phosphorolysis of single-stranded polyribonucleotides processively in the 3'- to 5'-direction. The sequence is that of Polyribonucleotide nucleotidyltransferase from Bifidobacterium adolescentis (strain ATCC 15703 / DSM 20083 / NCTC 11814 / E194a).